The sequence spans 368 residues: Probable dual-specificity RNA methyltransferase RlmN (368 aa).

The active-site Proton acceptor is Glu111. The Radical SAM core domain occupies 117–355; sequence YPNRATLCIS…CTVRDTRGQE (239 aa). The cysteines at positions 124 and 360 are disulfide-linked. Residues Cys131, Cys135, and Cys138 each coordinate [4Fe-4S] cluster. S-adenosyl-L-methionine is bound by residues 181 to 182, Ser215, 238 to 240, and Asn317; these read GE and SLH. Cys360 (S-methylcysteine intermediate) is an active-site residue.

The protein belongs to the radical SAM superfamily. RlmN family. Requires [4Fe-4S] cluster as cofactor.

The protein localises to the cytoplasm. It carries out the reaction adenosine(2503) in 23S rRNA + 2 reduced [2Fe-2S]-[ferredoxin] + 2 S-adenosyl-L-methionine = 2-methyladenosine(2503) in 23S rRNA + 5'-deoxyadenosine + L-methionine + 2 oxidized [2Fe-2S]-[ferredoxin] + S-adenosyl-L-homocysteine. The catalysed reaction is adenosine(37) in tRNA + 2 reduced [2Fe-2S]-[ferredoxin] + 2 S-adenosyl-L-methionine = 2-methyladenosine(37) in tRNA + 5'-deoxyadenosine + L-methionine + 2 oxidized [2Fe-2S]-[ferredoxin] + S-adenosyl-L-homocysteine. In terms of biological role, specifically methylates position 2 of adenine 2503 in 23S rRNA and position 2 of adenine 37 in tRNAs. This chain is Probable dual-specificity RNA methyltransferase RlmN, found in Corynebacterium diphtheriae (strain ATCC 700971 / NCTC 13129 / Biotype gravis).